The sequence spans 146 residues: VHLTNEEKTAVIGLWGKVNVEEVGGEALGRLLVVYPWTQRFFESFGDLSSPSAIMGNPKVKAHGKKVLNSFSEGLKNLDNLKGTFAKLSELHCDKLHVDPENFRLLGYILLCVLARHFGKEFTPQVQAAYQKVVAGVATALAHKYH.

At Val-1 the chain carries N-acetylvaline. A Globin domain is found at 2-146 (HLTNEEKTAV…VATALAHKYH (145 aa)). Position 44 is a phosphoserine (Ser-44). N6-acetyllysine is present on Lys-59. Residue His-63 coordinates heme b. Lys-82 is modified (N6-acetyllysine). His-92 is a binding site for heme b. Cys-93 is modified (S-nitrosocysteine). At Lys-144 the chain carries N6-acetyllysine.

Belongs to the globin family. Heterotetramer of two alpha chains and two beta chains. As to expression, red blood cells.

Involved in oxygen transport from the lung to the various peripheral tissues. The protein is Hemoglobin subunit beta (HBB) of Lyroderma lyra (Greater Asian false-vampire bat).